Here is a 354-residue protein sequence, read N- to C-terminus: UDP-N-acetylglucosamine--N-acetylmuramyl-(pentapeptide) pyrophosphoryl-undecaprenol N-acetylglucosamine transferase (354 aa).

Residues 14 to 16 (TGG), N126, R162, S190, I243, 262 to 267 (ALTVSE), and Q287 contribute to the UDP-N-acetyl-alpha-D-glucosamine site.

Belongs to the glycosyltransferase 28 family. MurG subfamily.

It localises to the cell inner membrane. It carries out the reaction di-trans,octa-cis-undecaprenyl diphospho-N-acetyl-alpha-D-muramoyl-L-alanyl-D-glutamyl-meso-2,6-diaminopimeloyl-D-alanyl-D-alanine + UDP-N-acetyl-alpha-D-glucosamine = di-trans,octa-cis-undecaprenyl diphospho-[N-acetyl-alpha-D-glucosaminyl-(1-&gt;4)]-N-acetyl-alpha-D-muramoyl-L-alanyl-D-glutamyl-meso-2,6-diaminopimeloyl-D-alanyl-D-alanine + UDP + H(+). It participates in cell wall biogenesis; peptidoglycan biosynthesis. Functionally, cell wall formation. Catalyzes the transfer of a GlcNAc subunit on undecaprenyl-pyrophosphoryl-MurNAc-pentapeptide (lipid intermediate I) to form undecaprenyl-pyrophosphoryl-MurNAc-(pentapeptide)GlcNAc (lipid intermediate II). The polypeptide is UDP-N-acetylglucosamine--N-acetylmuramyl-(pentapeptide) pyrophosphoryl-undecaprenol N-acetylglucosamine transferase (Photobacterium profundum (strain SS9)).